We begin with the raw amino-acid sequence, 498 residues long: Protein disulfide-isomerase (498 aa).

Residues M1 to S23 form the signal peptide. 2 Thioredoxin domains span residues A24 to G143 and Y339 to D484. N41 is a glycosylation site (N-linked (GlcNAc...) asparagine). Catalysis depends on nucleophile residues C61, C64, C406, and C409. 2 cysteine pairs are disulfide-bonded: C61–C64 and C406–C409. The short motif at K495–L498 is the Prevents secretion from ER element.

This sequence belongs to the protein disulfide isomerase family.

It localises to the endoplasmic reticulum lumen. It catalyses the reaction Catalyzes the rearrangement of -S-S- bonds in proteins.. In terms of biological role, participates in the folding of proteins containing disulfide bonds, may be involved in glycosylation, prolyl hydroxylation and triglyceride transfer. The chain is Protein disulfide-isomerase from Ricinus communis (Castor bean).